The following is a 213-amino-acid chain: MSRNSYIQQSSDIQAAGGLVPMVIEQSARGERAYDIYSRLLKERVIFLVGPVEDYMANLVVAQLLFLEAENPDKDIHLYINSPGGSVTAGMSIYDTMQFIKPDVSTICIGQACSMGAFLLAAGAAGKRHCLPNSRVMIHQPLGGFQGQATDIEIHAQEILNIKARLNELLAHHTGQSLETIKRDTERDNFMSAARAAEYGLIDSVYDKRQLAS.

Ser-114 (nucleophile) is an active-site residue. The active site involves His-139.

The protein belongs to the peptidase S14 family. Fourteen ClpP subunits assemble into 2 heptameric rings which stack back to back to give a disk-like structure with a central cavity, resembling the structure of eukaryotic proteasomes.

It localises to the cytoplasm. The enzyme catalyses Hydrolysis of proteins to small peptides in the presence of ATP and magnesium. alpha-casein is the usual test substrate. In the absence of ATP, only oligopeptides shorter than five residues are hydrolyzed (such as succinyl-Leu-Tyr-|-NHMec, and Leu-Tyr-Leu-|-Tyr-Trp, in which cleavage of the -Tyr-|-Leu- and -Tyr-|-Trp bonds also occurs).. Functionally, cleaves peptides in various proteins in a process that requires ATP hydrolysis. Has a chymotrypsin-like activity. Plays a major role in the degradation of misfolded proteins. The chain is ATP-dependent Clp protease proteolytic subunit from Pseudomonas entomophila (strain L48).